The sequence spans 197 residues: Transmembrane protein 126A (197 aa).

Over 1–35 (MENHEPDGTIIKENLTDIIARKINQLPEAERNLLE) the chain is Mitochondrial matrix. Residues 36–56 (NGSTYVGLNAALCGLIANSLF) form a helical membrane-spanning segment. The Mitochondrial intermembrane portion of the chain corresponds to 57–58 (RR). A helical membrane pass occupies residues 59–79 (ILHVTQARIAAGLPMAVIPFL). Topologically, residues 80–107 (TANVSYKGFVSLPLNTGDLQCETCTVTR) are mitochondrial matrix. The chain crosses the membrane as a helical span at residues 108-128 (GGLVGLVFGGLYPVFLAIPVN). Over 129 to 160 (GGLAARYNSALLPEKGNILNYWIRISKPVFRK) the chain is Mitochondrial intermembrane. A helical membrane pass occupies residues 161–177 (MLFPILLQTGFAAYLGS). Over 178–197 (RQYKLLIKALQLPEPGLEIE) the chain is Mitochondrial matrix.

The protein belongs to the TMEM126 family. Interacts with OXA1L; promoting cotranslational quality control in mitochondria.

It is found in the mitochondrion inner membrane. In terms of biological role, protein required for the cotranslational protein quality control in the inner membrane of the mitochondria. Associates with newly synthesized polypeptides and may act as a chaperone that cooperates with OXA1L for the insertion of newly synthesized mitochondrial proteins into the inner membrane. Required for the assembly of the ND4 module of mitochondrial complex I. This is Transmembrane protein 126A (TMEM126A) from Bos taurus (Bovine).